The chain runs to 75 residues: Conotoxin Vc6a (75 aa).

The N-terminal stretch at 1 to 22 is a signal peptide; that stretch reads MKLTCVVIVAVLFLTANTFATA. Positions 23 to 49 are excised as a propeptide; it reads DDPRNGLENLFLKAHHEMNPEASKLNE. 3 cysteine pairs are disulfide-bonded: cysteine 51-cysteine 66, cysteine 58-cysteine 69, and cysteine 65-cysteine 74.

As to expression, expressed by the venom duct.

The protein localises to the secreted. In Conus victoriae (Queen Victoria cone), this protein is Conotoxin Vc6a.